We begin with the raw amino-acid sequence, 186 residues long: Peptidyl-tRNA hydrolase (186 aa).

Position 14 (Tyr14) interacts with tRNA. His19 acts as the Proton acceptor in catalysis. Residues Tyr61, Asn63, and Asn107 each coordinate tRNA.

This sequence belongs to the PTH family. In terms of assembly, monomer.

It localises to the cytoplasm. It carries out the reaction an N-acyl-L-alpha-aminoacyl-tRNA + H2O = an N-acyl-L-amino acid + a tRNA + H(+). Hydrolyzes ribosome-free peptidyl-tRNAs (with 1 or more amino acids incorporated), which drop off the ribosome during protein synthesis, or as a result of ribosome stalling. Functionally, catalyzes the release of premature peptidyl moieties from peptidyl-tRNA molecules trapped in stalled 50S ribosomal subunits, and thus maintains levels of free tRNAs and 50S ribosomes. The sequence is that of Peptidyl-tRNA hydrolase from Helicobacter pylori (strain Shi470).